Reading from the N-terminus, the 56-residue chain is LAAVSVDCSEYPKPECTAEERPICGSDNKTYGNKCNFCNAVVESNGTLTLRNFGKC.

Positions 6-56 (VDCSEYPKPECTAEERPICGSDNKTYGNKCNFCNAVVESNGTLTLRNFGKC) constitute a Kazal-like domain. 3 disulfides stabilise this stretch: C8–C38, C16–C35, and C24–C56. N-linked (GlcNAc...) asparagine glycosylation occurs at N45.

The protein resides in the secreted. The protein is Ovomucoid of Bambusicola thoracicus (Chinese bamboo-partridge).